The chain runs to 332 residues: Ferredoxin--NADP reductase 1 (332 aa).

Residues Asp35, Lys43, Phe48, Val88, Phe123, Asp284, and Thr325 each coordinate FAD.

It belongs to the ferredoxin--NADP reductase type 2 family. As to quaternary structure, homodimer. FAD is required as a cofactor.

The enzyme catalyses 2 reduced [2Fe-2S]-[ferredoxin] + NADP(+) + H(+) = 2 oxidized [2Fe-2S]-[ferredoxin] + NADPH. In Listeria welshimeri serovar 6b (strain ATCC 35897 / DSM 20650 / CCUG 15529 / CIP 8149 / NCTC 11857 / SLCC 5334 / V8), this protein is Ferredoxin--NADP reductase 1.